The primary structure comprises 359 residues: Norspermidine sensor (359 aa).

An N-terminal signal peptide occupies residues 1–33; sequence MTNFCNEWVSYSQMIKRFLSLMVLNTVCYQASA.

The protein belongs to the bacterial solute-binding protein PotD/PotF family.

It localises to the periplasm. Functionally, acts as a sensor of norspermidine and enhances biofilm formation. When complexed to norspermidine, could interact with the periplasmic portion of MbaA to regulate its enzymatic activity. The protein is Norspermidine sensor (nspS) of Vibrio cholerae serotype O1 (strain ATCC 39315 / El Tor Inaba N16961).